A 747-amino-acid chain; its full sequence is ATPase family gene 2 protein homolog B (747 aa).

An N-acetylmethionine modification is found at Met-1. ATP is bound by residues 234–241 (GPPGVGKT) and 500–507 (GPPGCAKT).

The protein belongs to the AAA ATPase family. AFG2 subfamily. As to quaternary structure, part of the 55LCC heterohexameric ATPase complex composed at least of AIRIM, AFG2A, AFG2B and CINP. Associates with pre-60S ribosomal particles. In terms of tissue distribution, in adult ear, expressed at low levels in neurosensory hair cells (inner and outer) and supporting cells (pillar and Deiter cells).

It localises to the cytoplasm. Its subcellular location is the cytoskeleton. The protein resides in the spindle. The protein localises to the nucleus. It catalyses the reaction ATP + H2O = ADP + phosphate + H(+). In the context of 55LCC heterohexameric ATPase complex, the ATPase activity is stimulated by DNA binding and inhibited in presence of RNA. Functionally, ATP-dependent chaperone part of the 55LCC heterohexameric ATPase complex which is chromatin-associated and promotes replisome proteostasis to maintain replication fork progression and genome stability. Required for replication fork progression, sister chromatid cohesion, and chromosome stability. The ATPase activity is specifically enhanced by replication fork DNA and is coupled to cysteine protease-dependent cleavage of replisome substrates in response to replication fork damage. Uses ATPase activity to process replisome substrates in S-phase, facilitating their proteolytic turnover from chromatin to ensure DNA replication and mitotic fidelity. Plays an essential role in the cytoplasmic maturation steps of pre-60S ribosomal particles by promoting the release of shuttling protein RSL24D1/RLP24 from the pre-ribosomal particles. This is ATPase family gene 2 protein homolog B (Afg2b) from Mus musculus (Mouse).